A 180-amino-acid chain; its full sequence is MKSRLEIKYKDQIVPELFKELNYKSIMQVPKIQKIVINMGIGDATTDPKKLDAAIFELEKLSGQKPIVTKAKKSLAVFKLREGMAIGAKVTLRGKKMYDFLDKLINVALPRVRDFRGVSKTSFDGFGNFTTGIKEQIIFPEVDYDKVIRLRGMDITIVTSAKTNKEAFALLQKIGMPFEK.

It belongs to the universal ribosomal protein uL5 family. As to quaternary structure, part of the 50S ribosomal subunit; part of the 5S rRNA/L5/L18/L25 subcomplex. Contacts the 5S rRNA and the P site tRNA. Forms a bridge to the 30S subunit in the 70S ribosome.

Its function is as follows. This is one of the proteins that bind and probably mediate the attachment of the 5S RNA into the large ribosomal subunit, where it forms part of the central protuberance. In the 70S ribosome it contacts protein S13 of the 30S subunit (bridge B1b), connecting the 2 subunits; this bridge is implicated in subunit movement. Contacts the P site tRNA; the 5S rRNA and some of its associated proteins might help stabilize positioning of ribosome-bound tRNAs. The chain is Large ribosomal subunit protein uL5 from Mycoplasma capricolum subsp. capricolum (strain California kid / ATCC 27343 / NCTC 10154).